The primary structure comprises 398 residues: CCA-adding enzyme (398 aa).

ATP is bound by residues glycine 32 and arginine 35. Glycine 32 and arginine 35 together coordinate CTP. The Mg(2+) site is built by aspartate 45 and aspartate 47. Positions 116, 159, 162, 165, and 168 each coordinate ATP. 5 residues coordinate CTP: arginine 116, aspartate 159, arginine 162, arginine 165, and arginine 168.

Belongs to the tRNA nucleotidyltransferase/poly(A) polymerase family. Bacterial CCA-adding enzyme type 3 subfamily. As to quaternary structure, homodimer. It depends on Mg(2+) as a cofactor.

The catalysed reaction is a tRNA precursor + 2 CTP + ATP = a tRNA with a 3' CCA end + 3 diphosphate. The enzyme catalyses a tRNA with a 3' CCA end + 2 CTP + ATP = a tRNA with a 3' CCACCA end + 3 diphosphate. Catalyzes the addition and repair of the essential 3'-terminal CCA sequence in tRNAs without using a nucleic acid template. Adds these three nucleotides in the order of C, C, and A to the tRNA nucleotide-73, using CTP and ATP as substrates and producing inorganic pyrophosphate. tRNA 3'-terminal CCA addition is required both for tRNA processing and repair. Also involved in tRNA surveillance by mediating tandem CCA addition to generate a CCACCA at the 3' terminus of unstable tRNAs. While stable tRNAs receive only 3'-terminal CCA, unstable tRNAs are marked with CCACCA and rapidly degraded. This Lactobacillus gasseri (strain ATCC 33323 / DSM 20243 / BCRC 14619 / CIP 102991 / JCM 1131 / KCTC 3163 / NCIMB 11718 / NCTC 13722 / AM63) protein is CCA-adding enzyme.